The sequence spans 433 residues: LanC-like protein GCL1 (433 aa).

The segment at 1-22 (MSSSVDFVTEQGRCGDDGNGAG) is disordered.

This sequence belongs to the LanC-like protein family.

In terms of biological role, may play a role in signaling. May be not involved in abscisic acid (ABA) signaling. The protein is LanC-like protein GCL1 (GCL1) of Arabidopsis thaliana (Mouse-ear cress).